Here is a 470-residue protein sequence, read N- to C-terminus: L-fuculokinase (470 aa).

The protein belongs to the FGGY kinase family. Requires a divalent metal cation as cofactor.

It catalyses the reaction L-fuculose + ATP = L-fuculose 1-phosphate + ADP + H(+). It participates in carbohydrate degradation; L-fucose degradation; L-lactaldehyde and glycerone phosphate from L-fucose: step 2/3. Catalyzes the phosphorylation of L-fuculose. In Haemophilus influenzae (strain ATCC 51907 / DSM 11121 / KW20 / Rd), this protein is L-fuculokinase.